Reading from the N-terminus, the 213-residue chain is ATP phosphoribosyltransferase (213 aa).

The protein belongs to the ATP phosphoribosyltransferase family. Short subfamily. In terms of assembly, heteromultimer composed of HisG and HisZ subunits.

It is found in the cytoplasm. The enzyme catalyses 1-(5-phospho-beta-D-ribosyl)-ATP + diphosphate = 5-phospho-alpha-D-ribose 1-diphosphate + ATP. The protein operates within amino-acid biosynthesis; L-histidine biosynthesis; L-histidine from 5-phospho-alpha-D-ribose 1-diphosphate: step 1/9. Its function is as follows. Catalyzes the condensation of ATP and 5-phosphoribose 1-diphosphate to form N'-(5'-phosphoribosyl)-ATP (PR-ATP). Has a crucial role in the pathway because the rate of histidine biosynthesis seems to be controlled primarily by regulation of HisG enzymatic activity. The chain is ATP phosphoribosyltransferase from Listeria monocytogenes serotype 4a (strain HCC23).